The sequence spans 585 residues: Rhizobactin siderophore biosynthesis protein RhbC (585 aa).

Belongs to the IucA/IucC family.

Its pathway is siderophore biosynthesis; rhizobactin biosynthesis. This Rhizobium meliloti (strain 1021) (Ensifer meliloti) protein is Rhizobactin siderophore biosynthesis protein RhbC (rhbC).